We begin with the raw amino-acid sequence, 163 residues long: ATP synthase subunit b', chloroplastic (163 aa).

A helical membrane pass occupies residues 26 to 46 (ATLPLMALQFILLTVILTFVF).

The protein belongs to the ATPase B chain family. F-type ATPases have 2 components, F(1) - the catalytic core - and F(0) - the membrane proton channel. F(1) has five subunits: alpha(3), beta(3), gamma(1), delta(1), epsilon(1). F(0) has four main subunits: a(1), b(1), b'(1) and c(10-14). The alpha and beta chains form an alternating ring which encloses part of the gamma chain. F(1) is attached to F(0) by a central stalk formed by the gamma and epsilon chains, while a peripheral stalk is formed by the delta, b and b' chains.

The protein localises to the plastid. Its subcellular location is the chloroplast thylakoid membrane. Functionally, f(1)F(0) ATP synthase produces ATP from ADP in the presence of a proton or sodium gradient. F-type ATPases consist of two structural domains, F(1) containing the extramembraneous catalytic core and F(0) containing the membrane proton channel, linked together by a central stalk and a peripheral stalk. During catalysis, ATP synthesis in the catalytic domain of F(1) is coupled via a rotary mechanism of the central stalk subunits to proton translocation. Component of the F(0) channel, it forms part of the peripheral stalk, linking F(1) to F(0). The b'-subunit is a diverged and duplicated form of b found in plants and photosynthetic bacteria. This is ATP synthase subunit b', chloroplastic from Ochrosphaera neapolitana.